The sequence spans 147 residues: Hemoglobin subunit beta (147 aa).

The 145-residue stretch at 3–147 (HWTAEEKQLI…VAHALARKYH (145 aa)) folds into the Globin domain. The heme b site is built by H64 and H93.

The protein belongs to the globin family. In terms of assembly, heterotetramer of two alpha chains and two beta chains. Red blood cells.

Involved in oxygen transport from the lung to the various peripheral tissues. The sequence is that of Hemoglobin subunit beta (HBB) from Anas platyrhynchos (Mallard).